Reading from the N-terminus, the 419-residue chain is Dimethylallyltryptophan synthase 1 (419 aa).

L-tryptophan-binding residues include F81, M82, and E90. F81 contributes to the L-tyrosine binding site. Residues R105, K187, Y189, R251, K253, and Y255 each contribute to the (2E)-geranyl diphosphate site. Dimethylallyl diphosphate is bound by residues R105, K187, Y189, R251, K253, and Y255. R257 is a binding site for L-tryptophan. Residue R257 coordinates L-tyrosine. Residues K332 and Y334 each coordinate (2E)-geranyl diphosphate. K332 and Y334 together coordinate dimethylallyl diphosphate. Y389 is an L-tryptophan binding site. Y389 is a binding site for L-tyrosine. Y404 serves as a coordination point for (2E)-geranyl diphosphate.

Belongs to the tryptophan dimethylallyltransferase family.

It catalyses the reaction L-tyrosine + dimethylallyl diphosphate = 4-O-dimethylallyl-L-tyrosine + diphosphate. In terms of biological role, dimethylallyltryptophan synthase; part of the DMATS1 gene cluster that mediates the biosynthesis of a reversely N-prenylated monomeric L-tryptophan (r-N-DMAT). DMATS1 catalyzes the reverse N-prenylation of L-Trp with DMAPP to yield N-dimethylallyl-L-tryptophan. DMATS1 exhibits unusually broad substrate specificity and can utilize geranyl diphosphate (GPP) or L-Tyr as an alternative prenyl donor or acceptor, respectively. Is able to catalyze both forward and reverse prenylation, i.e., at C1 or C3 of DMAPP; and it can catalyze C-N and C-O bond-forming reactions. The main product of the cluster is the reverse-N-dimethylallyl-L-tryptophan (r-N-DMAT) produced by the dimethylallyltryptophan synthase DMATS1 and it remains unclear whether this metabolite undergoes further modifications when silent gene clusters are activated. The acetylated form of r-N-DMAT, ac-r-N-DMAT, is also produced. The roles of the cytochrome P450 monooxygenase FFUJ_09176 and the methyltransferase FFUJ_09178 have still to be elucidated. The sequence is that of Dimethylallyltryptophan synthase 1 from Gibberella fujikuroi (strain CBS 195.34 / IMI 58289 / NRRL A-6831) (Bakanae and foot rot disease fungus).